We begin with the raw amino-acid sequence, 60 residues long: Large ribosomal subunit protein bL32 (60 aa).

Positions 1–36 are disordered; that stretch reads MAVQQNKKSPSKRGMHRSHNALNTPGLAIEPTTGET. Residues 9 to 19 show a composition bias toward basic residues; the sequence is SPSKRGMHRSH.

This sequence belongs to the bacterial ribosomal protein bL32 family.

This is Large ribosomal subunit protein bL32 from Methylibium petroleiphilum (strain ATCC BAA-1232 / LMG 22953 / PM1).